The sequence spans 561 residues: Arginine--tRNA ligase (561 aa).

Positions 135-145 match the 'HIGH' region motif; sequence ANPTGLLHMGN.

The protein belongs to the class-I aminoacyl-tRNA synthetase family. Monomer.

Its subcellular location is the cytoplasm. It catalyses the reaction tRNA(Arg) + L-arginine + ATP = L-arginyl-tRNA(Arg) + AMP + diphosphate. In Desulfitobacterium hafniense (strain DSM 10664 / DCB-2), this protein is Arginine--tRNA ligase.